A 40-amino-acid polypeptide reads, in one-letter code: RNA replication protein (40 aa).

The protein belongs to the potexviruses/carlaviruses RNA replication protein family.

It carries out the reaction RNA(n) + a ribonucleoside 5'-triphosphate = RNA(n+1) + diphosphate. The catalysed reaction is ATP + H2O = ADP + phosphate + H(+). Its function is as follows. RNA replication. The central part of this protein possibly functions as an ATP-binding helicase. This chain is RNA replication protein, found in Lily symptomless virus (LSV).